We begin with the raw amino-acid sequence, 487 residues long: 3-octaprenyl-4-hydroxybenzoate carboxy-lyase (487 aa).

N172 serves as a coordination point for Mn(2+). Prenylated FMN-binding positions include 175-177 (IYR), 189-191 (RWL), and 194-195 (RG). E238 is a binding site for Mn(2+). The active-site Proton donor is the D287.

The protein belongs to the UbiD family. In terms of assembly, homohexamer. The cofactor is prenylated FMN. Requires Mn(2+) as cofactor.

Its subcellular location is the cell membrane. It catalyses the reaction a 4-hydroxy-3-(all-trans-polyprenyl)benzoate + H(+) = a 2-(all-trans-polyprenyl)phenol + CO2. Its pathway is cofactor biosynthesis; ubiquinone biosynthesis. Functionally, catalyzes the decarboxylation of 3-octaprenyl-4-hydroxy benzoate to 2-octaprenylphenol, an intermediate step in ubiquinone biosynthesis. This Nitrosomonas eutropha (strain DSM 101675 / C91 / Nm57) protein is 3-octaprenyl-4-hydroxybenzoate carboxy-lyase.